Consider the following 465-residue polypeptide: L-seryl-tRNA(Sec) selenium transferase (465 aa).

An N6-(pyridoxal phosphate)lysine modification is found at Lys-294.

It belongs to the SelA family. It depends on pyridoxal 5'-phosphate as a cofactor.

Its subcellular location is the cytoplasm. The catalysed reaction is L-seryl-tRNA(Sec) + selenophosphate + H(+) = L-selenocysteinyl-tRNA(Sec) + phosphate. The protein operates within aminoacyl-tRNA biosynthesis; selenocysteinyl-tRNA(Sec) biosynthesis; selenocysteinyl-tRNA(Sec) from L-seryl-tRNA(Sec) (bacterial route): step 1/1. Converts seryl-tRNA(Sec) to selenocysteinyl-tRNA(Sec) required for selenoprotein biosynthesis. This is L-seryl-tRNA(Sec) selenium transferase from Maridesulfovibrio salexigens (strain ATCC 14822 / DSM 2638 / NCIMB 8403 / VKM B-1763) (Desulfovibrio salexigens).